The sequence spans 72 residues: Large ribosomal subunit protein eL40 (72 aa).

Belongs to the eukaryotic ribosomal protein eL40 family.

The chain is Large ribosomal subunit protein eL40 from Nicotiana tabacum (Common tobacco).